Here is a 418-residue protein sequence, read N- to C-terminus: Ankyrin repeat domain-containing protein 61 (418 aa).

ANK repeat units follow at residues 27–57 (ALHS…NQPI), 75–104 (ESII…DPEV), 132–161 (NRTH…QVNT), 167–196 (NKRS…DVNA), 200–229 (ASMT…NVNC), 234–273 (TGNT…KVNA), 277–306 (KGQT…NVNI), and 310–343 (NGES…PLRM).

This Homo sapiens (Human) protein is Ankyrin repeat domain-containing protein 61 (ANKRD61).